Reading from the N-terminus, the 262-residue chain is Small ribosomal subunit protein eS4 (262 aa).

Residues 42–104 (LPLILILRNR…TNEDFRLLYD (63 aa)) enclose the S4 RNA-binding domain.

This sequence belongs to the eukaryotic ribosomal protein eS4 family.

The protein localises to the cytoplasm. This is Small ribosomal subunit protein eS4 (RPS4) from Gossypium hirsutum (Upland cotton).